Consider the following 429-residue polypeptide: Cytochrome bc1 complex Rieske iron-sulfur subunit (429 aa).

A disordered region spans residues 1–45 (MSRADDDAVGVPPTCGGRSDEEERRIVPGPNPQDGAKDGAKATAV). The next 3 helical transmembrane spans lie at 96–116 (VAVW…IFLF), 137–157 (PLYG…AVLY), and 207–227 (FGVG…GGLI). Residues 316-410 (RNPVMLIRIK…ITIDTDGYLV (95 aa)) form the Rieske domain. [2Fe-2S] cluster contacts are provided by Cys353, His355, Cys372, and His375. Cys358 and Cys374 form a disulfide bridge.

The protein belongs to the Rieske iron-sulfur protein family. As to quaternary structure, the cytochrome bc1 complex is composed of a cytochrome b (QcrB), the Rieske iron-sulfur protein (QcrA) and a diheme cytochrome c (QcrC) subunit. Requires [2Fe-2S] cluster as cofactor.

The protein resides in the cell membrane. Its function is as follows. Iron-sulfur subunit of the cytochrome bc1 complex, an essential component of the respiratory electron transport chain required for ATP synthesis. The bc1 complex catalyzes the oxidation of menaquinol and the reduction of cytochrome c in the respiratory chain. The bc1 complex operates through a Q-cycle mechanism that couples electron transfer to generation of the proton gradient that drives ATP synthesis. The protein is Cytochrome bc1 complex Rieske iron-sulfur subunit (qcrA) of Mycobacterium tuberculosis (strain CDC 1551 / Oshkosh).